We begin with the raw amino-acid sequence, 436 residues long: Adenosylhomocysteinase (436 aa).

Substrate-binding residues include threonine 62, aspartate 136, and glutamate 161. NAD(+) is bound at residue 162 to 164 (TTT). Residues lysine 191 and aspartate 195 each coordinate substrate. NAD(+)-binding positions include asparagine 196, 225–230 (GFGDVG), glutamate 248, asparagine 283, 304–306 (IGH), and asparagine 352.

Belongs to the adenosylhomocysteinase family. The cofactor is NAD(+).

The protein localises to the cytoplasm. The catalysed reaction is S-adenosyl-L-homocysteine + H2O = L-homocysteine + adenosine. It participates in amino-acid biosynthesis; L-homocysteine biosynthesis; L-homocysteine from S-adenosyl-L-homocysteine: step 1/1. Its function is as follows. May play a key role in the regulation of the intracellular concentration of adenosylhomocysteine. The chain is Adenosylhomocysteinase from Leptospira borgpetersenii serovar Hardjo-bovis (strain JB197).